Reading from the N-terminus, the 258-residue chain is Small ribosomal subunit protein mS40 (258 aa).

The transit peptide at Met-1–Lys-35 directs the protein to the mitochondrion. Ser-38 and Ser-49 each carry phosphoserine. A disordered region spans residues Ser-214–Leu-258. Pro residues predominate over residues Gly-229 to Thr-242. Over residues Glu-245 to Leu-258 the composition is skewed to polar residues.

It belongs to the bacterial ribosomal protein bS18 family. Mitochondrion-specific ribosomal protein mS40 subfamily. Component of the mitochondrial small ribosomal subunit (mt-SSU). Mature mammalian 55S mitochondrial ribosomes consist of a small (28S) and a large (39S) subunit. The 28S small subunit contains a 12S ribosomal RNA (12S mt-rRNA) and 30 different proteins. The 39S large subunit contains a 16S rRNA (16S mt-rRNA), a copy of mitochondrial valine transfer RNA (mt-tRNA(Val)), which plays an integral structural role, and 52 different proteins. mS40 has a zinc binding site.

Its subcellular location is the mitochondrion. The protein is Small ribosomal subunit protein mS40 (MRPS18B) of Homo sapiens (Human).